The chain runs to 226 residues: Lipoprotein-releasing system ATP-binding protein LolD 1 (226 aa).

The ABC transporter domain occupies 5–225; sequence LKLDGIRKSY…IVRVVDGKIA (221 aa). 42 to 49 contributes to the ATP binding site; that stretch reads GPSGSGKS.

It belongs to the ABC transporter superfamily. Lipoprotein translocase (TC 3.A.1.125) family. The complex is composed of two ATP-binding proteins (LolD) and two transmembrane proteins (LolC and LolE).

The protein resides in the cell inner membrane. Its function is as follows. Part of the ABC transporter complex LolCDE involved in the translocation of mature outer membrane-directed lipoproteins, from the inner membrane to the periplasmic chaperone, LolA. Responsible for the formation of the LolA-lipoprotein complex in an ATP-dependent manner. This chain is Lipoprotein-releasing system ATP-binding protein LolD 1, found in Rhodopseudomonas palustris (strain ATCC BAA-98 / CGA009).